A 723-amino-acid polypeptide reads, in one-letter code: Fatty acid oxidation complex subunit alpha (723 aa).

The interval 1–189 (MIYQANTLQV…KVGLLDAIVE (189 aa)) is enoyl-CoA hydratase/isomerase. Residue Asp-296 coordinates substrate. A 3-hydroxyacyl-CoA dehydrogenase region spans residues 311-723 (NKATERAAVL…FYDGQQASSL (413 aa)). Residues Met-325, Asp-344, 401 to 403 (VVE), Lys-408, and Ser-430 contribute to the NAD(+) site. Catalysis depends on His-451, which acts as the For 3-hydroxyacyl-CoA dehydrogenase activity. Asn-454 is an NAD(+) binding site. Positions 501 and 661 each coordinate substrate.

This sequence in the N-terminal section; belongs to the enoyl-CoA hydratase/isomerase family. It in the C-terminal section; belongs to the 3-hydroxyacyl-CoA dehydrogenase family. In terms of assembly, heterotetramer of two alpha chains (FadB) and two beta chains (FadA).

It carries out the reaction a (3S)-3-hydroxyacyl-CoA + NAD(+) = a 3-oxoacyl-CoA + NADH + H(+). It catalyses the reaction a (3S)-3-hydroxyacyl-CoA = a (2E)-enoyl-CoA + H2O. The enzyme catalyses a 4-saturated-(3S)-3-hydroxyacyl-CoA = a (3E)-enoyl-CoA + H2O. The catalysed reaction is (3S)-3-hydroxybutanoyl-CoA = (3R)-3-hydroxybutanoyl-CoA. It carries out the reaction a (3Z)-enoyl-CoA = a 4-saturated (2E)-enoyl-CoA. It catalyses the reaction a (3E)-enoyl-CoA = a 4-saturated (2E)-enoyl-CoA. The protein operates within lipid metabolism; fatty acid beta-oxidation. In terms of biological role, involved in the aerobic and anaerobic degradation of long-chain fatty acids via beta-oxidation cycle. Catalyzes the formation of 3-oxoacyl-CoA from enoyl-CoA via L-3-hydroxyacyl-CoA. It can also use D-3-hydroxyacyl-CoA and cis-3-enoyl-CoA as substrate. The sequence is that of Fatty acid oxidation complex subunit alpha from Vibrio atlanticus (strain LGP32) (Vibrio splendidus (strain Mel32)).